A 335-amino-acid polypeptide reads, in one-letter code: Protein PXR1 (335 aa).

In terms of domain architecture, G-patch spans K25 to K71. A disordered region spans residues D155–V310. A compositionally biased stretch (basic residues) spans S163 to R175. Over residues L183 to R209 the composition is skewed to basic and acidic residues. Residues K226–L257 are compositionally biased toward basic residues.

Belongs to the PINX1 family.

It is found in the nucleus. Its subcellular location is the nucleolus. In terms of biological role, involved in rRNA-processing at A0, A1 and A2 sites and negatively regulates telomerase. The sequence is that of Protein PXR1 (PXR1) from Eremothecium gossypii (strain ATCC 10895 / CBS 109.51 / FGSC 9923 / NRRL Y-1056) (Yeast).